A 508-amino-acid chain; its full sequence is Photosystem II CP47 reaction center protein (508 aa).

Helical transmembrane passes span 21–36, 101–115, 140–156, 203–218, 237–252, and 457–472; these read SVHI…WAGS, IVFS…IWHW, GIHL…FGVF, IAAG…FHLS, VLSS…AFVV, and SFAL…HGAR.

It belongs to the PsbB/PsbC family. PsbB subfamily. PSII is composed of 1 copy each of membrane proteins PsbA, PsbB, PsbC, PsbD, PsbE, PsbF, PsbH, PsbI, PsbJ, PsbK, PsbL, PsbM, PsbT, PsbX, PsbY, PsbZ, Psb30/Ycf12, at least 3 peripheral proteins of the oxygen-evolving complex and a large number of cofactors. It forms dimeric complexes. It depends on Binds multiple chlorophylls. PSII binds additional chlorophylls, carotenoids and specific lipids. as a cofactor.

Its subcellular location is the plastid. The protein resides in the chloroplast thylakoid membrane. Its function is as follows. One of the components of the core complex of photosystem II (PSII). It binds chlorophyll and helps catalyze the primary light-induced photochemical processes of PSII. PSII is a light-driven water:plastoquinone oxidoreductase, using light energy to abstract electrons from H(2)O, generating O(2) and a proton gradient subsequently used for ATP formation. This is Photosystem II CP47 reaction center protein from Jasminum nudiflorum (Winter jasmine).